The following is a 372-amino-acid chain: tRNA-specific 2-thiouridylase MnmA (372 aa).

Residues 11-18 (GMSGGVDS) and M37 each bind ATP. An interaction with target base in tRNA region spans residues 97-99 (NPD). C102 acts as the Nucleophile in catalysis. A disulfide bond links C102 and C199. G126 lines the ATP pocket. Residues 149–151 (KDQ) are interaction with tRNA. C199 serves as the catalytic Cysteine persulfide intermediate. Residues 309-310 (RY) are interaction with tRNA.

It belongs to the MnmA/TRMU family.

The protein resides in the cytoplasm. The enzyme catalyses S-sulfanyl-L-cysteinyl-[protein] + uridine(34) in tRNA + AH2 + ATP = 2-thiouridine(34) in tRNA + L-cysteinyl-[protein] + A + AMP + diphosphate + H(+). Catalyzes the 2-thiolation of uridine at the wobble position (U34) of tRNA, leading to the formation of s(2)U34. The protein is tRNA-specific 2-thiouridylase MnmA of Staphylococcus aureus (strain bovine RF122 / ET3-1).